Reading from the N-terminus, the 198-residue chain is Glycerol-3-phosphate acyltransferase (198 aa).

The next 5 membrane-spanning stretches (helical) occupy residues 2 to 22, 53 to 75, 79 to 98, 113 to 133, and 147 to 167; these read FITY…FALV, AGFI…PLIF, IHPL…PIFA, LLCY…TLLF, and IAAV…AMCL.

Belongs to the PlsY family. As to quaternary structure, probably interacts with PlsX.

The protein resides in the cell membrane. It catalyses the reaction an acyl phosphate + sn-glycerol 3-phosphate = a 1-acyl-sn-glycero-3-phosphate + phosphate. It functions in the pathway lipid metabolism; phospholipid metabolism. Its function is as follows. Catalyzes the transfer of an acyl group from acyl-phosphate (acyl-PO(4)) to glycerol-3-phosphate (G3P) to form lysophosphatidic acid (LPA). This enzyme utilizes acyl-phosphate as fatty acyl donor, but not acyl-CoA or acyl-ACP. This is Glycerol-3-phosphate acyltransferase from Bacillus cytotoxicus (strain DSM 22905 / CIP 110041 / 391-98 / NVH 391-98).